Reading from the N-terminus, the 496-residue chain is Lysine--tRNA ligase (496 aa).

The Mg(2+) site is built by glutamate 409 and glutamate 416.

Belongs to the class-II aminoacyl-tRNA synthetase family. In terms of assembly, homodimer. Requires Mg(2+) as cofactor.

The protein localises to the cytoplasm. It catalyses the reaction tRNA(Lys) + L-lysine + ATP = L-lysyl-tRNA(Lys) + AMP + diphosphate. This Streptococcus pneumoniae serotype 4 (strain ATCC BAA-334 / TIGR4) protein is Lysine--tRNA ligase.